Consider the following 246-residue polypeptide: NAD-dependent protein deacylase (246 aa).

The region spanning 2–246 (PTAVSDAAAP…AGVCLPAMLA (245 aa)) is the Deacetylase sirtuin-type domain. 29–49 (GAGVSAESGVPTFRDALTGLW) is a binding site for NAD(+). Positions 74 and 77 each coordinate substrate. 107-110 (QNVD) contacts NAD(+). The active-site Proton acceptor is H125. Zn(2+) is bound by residues C137, C140, C153, and C156. NAD(+)-binding positions include 193 to 195 (GTS), 219 to 221 (NPE), and A237.

This sequence belongs to the sirtuin family. Class III subfamily. Requires Zn(2+) as cofactor.

Its subcellular location is the cytoplasm. The enzyme catalyses N(6)-acetyl-L-lysyl-[protein] + NAD(+) + H2O = 2''-O-acetyl-ADP-D-ribose + nicotinamide + L-lysyl-[protein]. The catalysed reaction is N(6)-succinyl-L-lysyl-[protein] + NAD(+) + H2O = 2''-O-succinyl-ADP-D-ribose + nicotinamide + L-lysyl-[protein]. In terms of biological role, NAD-dependent lysine deacetylase and desuccinylase that specifically removes acetyl and succinyl groups on target proteins. Modulates the activities of several proteins which are inactive in their acylated form. In Ralstonia nicotianae (strain ATCC BAA-1114 / GMI1000) (Ralstonia solanacearum), this protein is NAD-dependent protein deacylase.